The sequence spans 855 residues: Beclin-1-like protein B (855 aa).

Disordered regions lie at residues 92-212 (FGKR…GSLS), 236-271 (LVAD…ESNN), 294-380 (ATIP…QKPR), and 407-475 (VDGG…QQQP). Low complexity-rich tracts occupy residues 99–123 (TQSN…SLSL) and 131–143 (QQQQ…QQQT). Residues 144-156 (FNDQSKLTATTPT) are compositionally biased toward polar residues. Residues 177–200 (HSNNSSNGSDHGGNVNTTGVSPSS) are compositionally biased toward low complexity. Residues 294 to 348 (ATIPTTTTTSTPTTPSTVGGTTPSPPSSSSSSSSSSSVITSPISRISPSNITSPS) show a composition bias toward low complexity. Composition is skewed to polar residues over residues 368-377 (LNISQVSSPQ) and 413-445 (SGTE…TTPP). Residues 446–474 (LLSNSMNNSTNNLQSLQQQQQQQQQQQQQ) show a composition bias toward low complexity. A coiled-coil region spans residues 538-595 (EKGKTEEDLEELGKEMTLLCEEEEQLRLMIENTHQERKEVEQLTLQLQDRIATLKSLE). The interval 826–855 (LNNNQNNNNINNNNNNNINNNNNNNVNKRN) is disordered.

The protein belongs to the beclin family.

Its subcellular location is the endosome membrane. Involved in autophagy. May be required to recruit the atg8-phosphatidylinositol conjugate and the atg12-atg5 conjugate to the pre-autophagosomal structure. In Dictyostelium discoideum (Social amoeba), this protein is Beclin-1-like protein B (atg6B).